The sequence spans 1106 residues: Protein transport protein Sec31A (1106 aa).

WD repeat units lie at residues 4-47 (KEVD…EIFE), 68-111 (RYHK…AGDK), 120-160 (KHTG…TPMT), 166-206 (QPPE…PIIK), 209-254 (DHSN…SPLR), 258-298 (NHAR…VLYE), and 301-342 (TNTQ…DGLR). The tract at residues 161–471 (PGAKTQPPED…IDASQTEFEK (311 aa)) is interaction with SEC13. The stretch at 397 to 430 (SFSFGGKLVTFENVRMPSHQGAEQQQQQHHVFIS) is one WD 8; interaction with SEC13 repeat. A phosphoserine mark is found at Ser-527 and Ser-532. Lys-647 participates in a covalent cross-link: Glycyl lysine isopeptide (Lys-Gly) (interchain with G-Cter in ubiquitin). At Ser-799 the chain carries Phosphoserine. Residues 800 to 999 (PKIPYEEQQL…TKKITKKPIP (200 aa)) are interaction with PDCD6. Positions 842 to 848 (GFIMHGN) match the ALG-2-binding site motif-2 (ABS-2) motif. The interval 859 to 980 (TSPGHMHTQV…EGAPGAPIGN (122 aa)) is disordered. Residues 917-939 (PQSQMLQQQPSAPVPLSSQSSFP) show a composition bias toward polar residues. Thr-1047 bears the Phosphothreonine mark. Position 1049 is a phosphoserine (Ser-1049). Lys-1103 is covalently cross-linked (Glycyl lysine isopeptide (Lys-Gly) (interchain with G-Cter in ubiquitin)).

The protein belongs to the WD repeat SEC31 family. As to quaternary structure, COPII is composed of at least 5 proteins: the SEC23/24 complex, the SEC13/31 complex and SAR1. SEC13 and SEC31 make a 2:2 tetramer that forms the edge element of the COPII outer coat. The tetramer self-assembles in multiple copies to form the complete polyhedral cage. Interacts (via WD 8) with SEC13. Interacts with PDCD6; interaction takes place in response to cytosolic calcium increase and leads to bridge together the BCR(KLHL12) complex and SEC31A, leading to monoubiquitination. Interacts with KLHL12. Post-translationally, monoubiquitinated by the BCR(KLHL12) E3 ubiquitin ligase complex, leading to regulate the size of COPII coats.

It localises to the cytoplasm. The protein localises to the cytoplasmic vesicle. Its subcellular location is the COPII-coated vesicle membrane. The protein resides in the endoplasmic reticulum membrane. Its function is as follows. Component of the coat protein complex II (COPII) which promotes the formation of transport vesicles from the endoplasmic reticulum (ER). The coat has two main functions, the physical deformation of the endoplasmic reticulum membrane into vesicles and the selection of cargo molecules. The protein is Protein transport protein Sec31A (SEC31A) of Pongo abelii (Sumatran orangutan).